Reading from the N-terminus, the 265-residue chain is Mlc titration factor A (265 aa).

Zn(2+) is bound by residues H111, H148, H152, and E211.

It belongs to the MtfA family. As to quaternary structure, interacts with Mlc. The cofactor is Zn(2+).

The protein resides in the cytoplasm. In terms of biological role, involved in the modulation of the activity of the glucose-phosphotransferase system (glucose-PTS). Interacts with the transcriptional repressor Mlc, preventing its interaction with DNA and leading to the modulation of expression of genes regulated by Mlc, including ptsG, which encodes the PTS system glucose-specific EIICB component. Shows zinc-dependent metallopeptidase activity. This chain is Mlc titration factor A, found in Cronobacter sakazakii (strain ATCC BAA-894) (Enterobacter sakazakii).